The chain runs to 174 residues: uncharacterized protein (174 aa).

The protein to E.coli HemX C-terminal region.

This is an uncharacterized protein from Haemophilus influenzae (strain ATCC 51907 / DSM 11121 / KW20 / Rd).